The chain runs to 38 residues: Photosystem II reaction center protein L (38 aa).

A helical membrane pass occupies residues 17–37; it reads SLYWGLLLMFVLAVLFSSYFF.

Belongs to the PsbL family. As to quaternary structure, PSII is composed of 1 copy each of membrane proteins PsbA, PsbB, PsbC, PsbD, PsbE, PsbF, PsbH, PsbI, PsbJ, PsbK, PsbL, PsbM, PsbT, PsbX, PsbY, PsbZ, Psb30/Ycf12, at least 3 peripheral proteins of the oxygen-evolving complex and a large number of cofactors. It forms dimeric complexes.

It localises to the plastid. The protein resides in the chloroplast thylakoid membrane. Its function is as follows. One of the components of the core complex of photosystem II (PSII). PSII is a light-driven water:plastoquinone oxidoreductase that uses light energy to abstract electrons from H(2)O, generating O(2) and a proton gradient subsequently used for ATP formation. It consists of a core antenna complex that captures photons, and an electron transfer chain that converts photonic excitation into a charge separation. This subunit is found at the monomer-monomer interface and is required for correct PSII assembly and/or dimerization. The chain is Photosystem II reaction center protein L from Emiliania huxleyi (Coccolithophore).